The primary structure comprises 246 residues: Alpha-tubulin N-acetyltransferase (246 aa).

One can recognise an N-acetyltransferase domain in the interval 21–202; sequence LTLVPDGVSR…NNFVVFHSFF (182 aa). Residues 135 to 148 and 172 to 181 each bind acetyl-CoA; these read FYVD…GYGK and SNKLLGFLRK.

It belongs to the acetyltransferase ATAT1 family.

The catalysed reaction is L-lysyl-[alpha-tubulin] + acetyl-CoA = N(6)-acetyl-L-lysyl-[alpha-tubulin] + CoA + H(+). Functionally, specifically acetylates 'Lys-40' in alpha-tubulin on the lumenal side of microtubules. Promotes microtubule destabilization and accelerates microtubule dynamics; this activity may be independent of acetylation activity. Acetylates alpha-tubulin with a slow enzymatic rate, due to a catalytic site that is not optimized for acetyl transfer. Enters the microtubule through each end and diffuses quickly throughout the lumen of microtubules. Acetylates only long/old microtubules because of its slow acetylation rate since it does not have time to act on dynamically unstable microtubules before the enzyme is released. This is Alpha-tubulin N-acetyltransferase from Leishmania infantum.